Reading from the N-terminus, the 53-residue chain is Rubredoxin (53 aa).

The region spanning 1 to 52 (MAKWRCKICGYIYDEDEGDPDNGISPGTKFEDLPDDWVCPLCGAPKSEFERI) is the Rubredoxin-like domain. 4 residues coordinate Fe cation: cysteine 6, cysteine 9, cysteine 39, and cysteine 42.

The protein belongs to the rubredoxin family. Fe(3+) serves as cofactor.

Functionally, rubredoxin is a small nonheme, iron protein lacking acid-labile sulfide. Its single Fe, chelated to 4 Cys, functions as an electron acceptor and may also stabilize the conformation of the molecule. This is Rubredoxin (rub) from Pyrococcus abyssi (strain GE5 / Orsay).